The chain runs to 429 residues: Serine hydroxymethyltransferase 1 (429 aa).

(6S)-5,6,7,8-tetrahydrofolate contacts are provided by residues Leu125 and 129–131; that span reads GHL. Lys234 is modified (N6-(pyridoxal phosphate)lysine).

This sequence belongs to the SHMT family. As to quaternary structure, homodimer. Pyridoxal 5'-phosphate serves as cofactor.

The protein resides in the cytoplasm. The enzyme catalyses (6R)-5,10-methylene-5,6,7,8-tetrahydrofolate + glycine + H2O = (6S)-5,6,7,8-tetrahydrofolate + L-serine. It participates in one-carbon metabolism; tetrahydrofolate interconversion. Its pathway is amino-acid biosynthesis; glycine biosynthesis; glycine from L-serine: step 1/1. Functionally, catalyzes the reversible interconversion of serine and glycine with tetrahydrofolate (THF) serving as the one-carbon carrier. This reaction serves as the major source of one-carbon groups required for the biosynthesis of purines, thymidylate, methionine, and other important biomolecules. Also exhibits THF-independent aldolase activity toward beta-hydroxyamino acids, producing glycine and aldehydes, via a retro-aldol mechanism. This Agrobacterium fabrum (strain C58 / ATCC 33970) (Agrobacterium tumefaciens (strain C58)) protein is Serine hydroxymethyltransferase 1.